We begin with the raw amino-acid sequence, 21 residues long: Dahlein-5.4 (21 aa).

Expressed by the skin dorsal glands.

The protein localises to the secreted. In terms of biological role, has no antimicrobial activity. Strongly inhibits the formation of NO by neuronal nitric oxide synthase at micromolar concentrations. The polypeptide is Dahlein-5.4 (Ranoidea dahlii (Dahl's aquatic frog)).